A 425-amino-acid polypeptide reads, in one-letter code: UDP-N-acetylglucosamine 1-carboxyvinyltransferase (425 aa).

22 to 23 (KN) contacts phosphoenolpyruvate. R93 is a binding site for UDP-N-acetyl-alpha-D-glucosamine. The Proton donor role is filled by C117. A 2-(S-cysteinyl)pyruvic acid O-phosphothioketal modification is found at C117. UDP-N-acetyl-alpha-D-glucosamine is bound by residues 122–126 (RPIDL), D307, and V329.

The protein belongs to the EPSP synthase family. MurA subfamily.

The protein localises to the cytoplasm. The enzyme catalyses phosphoenolpyruvate + UDP-N-acetyl-alpha-D-glucosamine = UDP-N-acetyl-3-O-(1-carboxyvinyl)-alpha-D-glucosamine + phosphate. It functions in the pathway cell wall biogenesis; peptidoglycan biosynthesis. Cell wall formation. Adds enolpyruvyl to UDP-N-acetylglucosamine. In Prosthecochloris aestuarii (strain DSM 271 / SK 413), this protein is UDP-N-acetylglucosamine 1-carboxyvinyltransferase.